The following is a 505-amino-acid chain: uncharacterized protein (505 aa).

An N-terminal signal peptide occupies residues 1-19 (MILFTAIILVASVVHVVVS). Over 20 to 483 (SPQQCYYCVE…EQPNSAPRGE (464 aa)) the chain is Extracellular. A helical transmembrane segment spans residues 484 to 504 (IHQLFRCTFVAVFIVFACFIV). Position 505 (cysteine 505) is a topological domain, cytoplasmic.

As to expression, component of the acid-insoluble and acid-soluble organic matrix of the aragonitic skeleton (at protein level).

The protein localises to the membrane. This is an uncharacterized protein from Acropora millepora (Staghorn coral).